The sequence spans 310 residues: Tagatose-6-phosphate kinase (310 aa).

The protein belongs to the carbohydrate kinase PfkB family. LacC subfamily.

The enzyme catalyses D-tagatofuranose 6-phosphate + ATP = D-tagatofuranose 1,6-bisphosphate + ADP + H(+). Its pathway is carbohydrate metabolism; D-tagatose 6-phosphate degradation; D-glyceraldehyde 3-phosphate and glycerone phosphate from D-tagatose 6-phosphate: step 1/2. In Streptococcus mutans serotype c (strain ATCC 700610 / UA159), this protein is Tagatose-6-phosphate kinase.